Here is a 139-residue protein sequence, read N- to C-terminus: ATP synthase epsilon chain (139 aa).

Belongs to the ATPase epsilon chain family. As to quaternary structure, F-type ATPases have 2 components, CF(1) - the catalytic core - and CF(0) - the membrane proton channel. CF(1) has five subunits: alpha(3), beta(3), gamma(1), delta(1), epsilon(1). CF(0) has three main subunits: a, b and c.

The protein localises to the cell inner membrane. In terms of biological role, produces ATP from ADP in the presence of a proton gradient across the membrane. This chain is ATP synthase epsilon chain, found in Serratia proteamaculans (strain 568).